Consider the following 137-residue polypeptide: Putative pre-16S rRNA nuclease (137 aa).

Belongs to the YqgF nuclease family.

The protein localises to the cytoplasm. Could be a nuclease involved in processing of the 5'-end of pre-16S rRNA. In Anaeromyxobacter dehalogenans (strain 2CP-1 / ATCC BAA-258), this protein is Putative pre-16S rRNA nuclease.